A 142-amino-acid chain; its full sequence is Large-conductance mechanosensitive channel (142 aa).

Transmembrane regions (helical) follow at residues 14–34 (VMDL…VTSV), 38–58 (LVMP…NYFL), and 82–102 (GSFI…FLLV).

It belongs to the MscL family. Homopentamer.

It localises to the cell inner membrane. In terms of biological role, channel that opens in response to stretch forces in the membrane lipid bilayer. May participate in the regulation of osmotic pressure changes within the cell. The sequence is that of Large-conductance mechanosensitive channel from Sinorhizobium fredii (strain NBRC 101917 / NGR234).